An 885-amino-acid polypeptide reads, in one-letter code: DNA mismatch repair protein MutS (885 aa).

Residue 640 to 647 (GPNMGGKS) participates in ATP binding.

It belongs to the DNA mismatch repair MutS family.

Its function is as follows. This protein is involved in the repair of mismatches in DNA. It is possible that it carries out the mismatch recognition step. This protein has a weak ATPase activity. The sequence is that of DNA mismatch repair protein MutS from Variovorax paradoxus (strain S110).